The sequence spans 156 residues: MKQSLGLLEVSGLALAISCADVMAKAASITLVGLEKTNGSGWMVIKIIGDVASVQAAISTGVSFADQRDGLVAHKVISRPGDGILSHSVTPESESEPAPAPTPVVPHEEIPEDHAAPEAPQDAELISCNLCLDPACPRQKGEPRSLCLHSGKRGEA.

Residues 4-89 (SLGLLEVSGL…PGDGILSHSV (86 aa)) enclose the BMC domain. Residues 81–119 (GDGILSHSVTPESESEPAPAPTPVVPHEEIPEDHAAPEA) form a disordered region. Over residues 106-116 (PHEEIPEDHAA) the composition is skewed to basic and acidic residues.

The protein belongs to the bacterial microcompartments protein family. Interacts with shell protein PduA and assembly protein PduM. Interacts with PduP, probably with its first 18 residues. Fe cation is required as a cofactor.

It is found in the bacterial microcompartment. The protein operates within polyol metabolism; 1,2-propanediol degradation. In terms of biological role, a minor shell protein of the bacterial microcompartment (BMC) dedicated to 1,2-propanediol (1,2-PD) degradation. Functionally, expression of a cosmid containing the full 21-gene pdu operon in E.coli allows E.coli to grow on 1,2-propanediol (1,2-PD) with the appearance of bacterial microcompartments (BMC) in its cytoplasm. Overexpression of this protein leads to the appearance of a single large aggregate complex in the cytoplasm. The 1,2-PD-specific bacterial microcompartment (BMC) concentrates low levels of 1,2-PD catabolic enzymes, concentrates volatile reaction intermediates thus enhancing pathway flux and keeps the level of toxic, mutagenic propionaldehyde low. In Citrobacter freundii, this protein is Bacterial microcompartment shell protein PduK.